The primary structure comprises 139 residues: Cytochrome c-type biogenesis protein CcmE 2 (139 aa).

The Cytoplasmic portion of the chain corresponds to 1-9; it reads MASLKKSRR. The helical; Signal-anchor for type II membrane protein transmembrane segment at 10 to 30 threads the bilayer; sequence VRLILFSGVALVSATALIGYA. Over 31-139 the chain is Periplasmic; the sequence is MRDGIQFFRT…ELAEMEALRD (109 aa). Residues H122 and Y126 each contribute to the heme site.

This sequence belongs to the CcmE/CycJ family.

It localises to the cell inner membrane. Its function is as follows. Heme chaperone required for the biogenesis of c-type cytochromes. Transiently binds heme delivered by CcmC and transfers the heme to apo-cytochromes in a process facilitated by CcmF and CcmH. This Ruegeria pomeroyi (strain ATCC 700808 / DSM 15171 / DSS-3) (Silicibacter pomeroyi) protein is Cytochrome c-type biogenesis protein CcmE 2.